Reading from the N-terminus, the 446-residue chain is ATP-dependent protease ATPase subunit HslU (446 aa).

ATP-binding positions include valine 17, 59 to 64, aspartate 255, glutamate 320, and arginine 392; that span reads GVGKTE.

It belongs to the ClpX chaperone family. HslU subfamily. In terms of assembly, a double ring-shaped homohexamer of HslV is capped on each side by a ring-shaped HslU homohexamer. The assembly of the HslU/HslV complex is dependent on binding of ATP.

Its subcellular location is the cytoplasm. ATPase subunit of a proteasome-like degradation complex; this subunit has chaperone activity. The binding of ATP and its subsequent hydrolysis by HslU are essential for unfolding of protein substrates subsequently hydrolyzed by HslV. HslU recognizes the N-terminal part of its protein substrates and unfolds these before they are guided to HslV for hydrolysis. The protein is ATP-dependent protease ATPase subunit HslU of Azotobacter vinelandii (strain DJ / ATCC BAA-1303).